Here is a 1523-residue protein sequence, read N- to C-terminus: Lysophospholipase nte1 (1523 aa).

At 1 to 66 (MADGVTLVDS…LPPVPTTMAG (66 aa)) the chain is on the cytoplasmic side. A helical transmembrane segment spans residues 67–87 (WIGWVFSFFFQVIPSVLYWVI). Residues 88–109 (TFSTITLPTWLFTLFSMSLTFT) lie on the Lumenal side of the membrane. Residues 110–130 (MNFTTLLLIVLAMVSTISWFI) traverse the membrane as a helical segment. The Cytoplasmic portion of the chain corresponds to 131–1523 (RYRFLNMYSR…RTMAPRRASI (1393 aa)). 2 disordered regions span residues 309-384 (VPNS…KSVH) and 524-545 (RAATVVTPESAPAEHDTYGVSP). Residues 370 to 382 (ESRKHSSRKRRKS) show a composition bias toward basic residues. Residues 681–800 (GGTS…GAVA) and 841–961 (RLTS…IAQR) each bind a nucleoside 3',5'-cyclic phosphate. One can recognise a PNPLA domain in the interval 1220-1384 (LVLGGGGARG…IDNLTVDHMK (165 aa)). Residues 1224 to 1229 (GGGARG) carry the GXGXXG motif. Positions 1251–1255 (GTSIG) match the GXSXG motif. Ser1253 serves as the catalytic Nucleophile. Catalysis depends on Asp1371, which acts as the Proton acceptor. Positions 1371-1373 (DGG) match the DGA/G motif. The segment at 1502–1523 (LPEETEEKKKLQRTMAPRRASI) is disordered.

This sequence belongs to the NTE family.

The protein resides in the endoplasmic reticulum membrane. It catalyses the reaction a 1-acyl-sn-glycero-3-phosphocholine + H2O = sn-glycerol 3-phosphocholine + a fatty acid + H(+). With respect to regulation, inhibited by organophosphorus esters. Functionally, intracellular phospholipase B that catalyzes the double deacylation of phosphatidylcholine (PC) to glycerophosphocholine (GroPCho). Plays an important role in membrane lipid homeostasis. Responsible for the rapid PC turnover in response to inositol, elevated temperatures, or when choline is present in the growth medium. The protein is Lysophospholipase nte1 (nte1) of Neosartorya fischeri (strain ATCC 1020 / DSM 3700 / CBS 544.65 / FGSC A1164 / JCM 1740 / NRRL 181 / WB 181) (Aspergillus fischerianus).